A 160-amino-acid chain; its full sequence is Troponin C, skeletal muscle (160 aa).

Thr2 bears the N-acetylthreonine mark. EF-hand domains are found at residues 15 to 50 (EMIA…LGQT), 51 to 86 (PTKE…QMKE), 91 to 126 (KSEE…SGEH), and 127 to 160 (VTDE…EGVQ). Residues Asp28, Asp30, Asp34, Glu39, Asp64, Asp66, Ser68, Thr70, Glu75, Asp104, Asn106, Asp108, Tyr110, Glu115, Asp140, Asn142, Asp144, Arg146, and Glu151 each coordinate Ca(2+).

This sequence belongs to the troponin C family.

In terms of biological role, troponin is the central regulatory protein of striated muscle contraction. Tn consists of three components: Tn-I which is the inhibitor of actomyosin ATPase, Tn-T which contains the binding site for tropomyosin and Tn-C. The binding of calcium to Tn-C abolishes the inhibitory action of Tn on actin filaments. The polypeptide is Troponin C, skeletal muscle (TNNC2) (Homo sapiens (Human)).